A 198-amino-acid chain; its full sequence is Crinkler effector protein BLC01 (198 aa).

An N-terminal signal peptide occupies residues 1 to 15 (MMVKLICAIVDIAGA). The LQLFLAK domain stretch occupies residues 16–55 (AFPIDIDTNELVGDFKKVIKAENSRTIACDANDLRLFLAK). A DWL domain region spans residues 56 to 113 (TDGRWLTEFEVQNGVADISVFEELDVVGAPLNMIGLSEETVSSVAITKELVKAKKTPL). The HVLVXXP motif signature appears at 114–119 (HVLVVP).

The protein belongs to the Crinkler effector family.

The protein localises to the secreted. The protein resides in the host cell. Its function is as follows. Secreted effector that elicits necrosis in host plants, a characteristic of plant innate immunity. The sequence is that of Crinkler effector protein BLC01 from Bremia lactucae (Lettuce downy mildew).